The following is a 391-amino-acid chain: Elongation factor Tu (391 aa).

The tr-type G domain occupies 10–201; sequence KPHVNIGTIG…QVDAYIPTPV (192 aa). A G1 region spans residues 19–26; that stretch reads GHVDHGKT. Residue 19 to 26 participates in GTP binding; the sequence is GHVDHGKT. Threonine 26 serves as a coordination point for Mg(2+). The segment at 55–59 is G2; the sequence is GITIS. The tract at residues 76-79 is G3; it reads DCPG. GTP is bound by residues 76 to 80 and 131 to 134; these read DCPGH and NKVD. Residues 131-134 are G4; the sequence is NKVD. The interval 169-171 is G5; sequence SAL.

It belongs to the TRAFAC class translation factor GTPase superfamily. Classic translation factor GTPase family. EF-Tu/EF-1A subfamily. Monomer.

Its subcellular location is the cytoplasm. The catalysed reaction is GTP + H2O = GDP + phosphate + H(+). GTP hydrolase that promotes the GTP-dependent binding of aminoacyl-tRNA to the A-site of ribosomes during protein biosynthesis. The polypeptide is Elongation factor Tu (Mesorhizobium japonicum (strain LMG 29417 / CECT 9101 / MAFF 303099) (Mesorhizobium loti (strain MAFF 303099))).